We begin with the raw amino-acid sequence, 155 residues long: MGVQKSEVEATSSVSAEKLFKGLCLDIDTLLPRVLPGAIKSSETLEGDGGVGTVKLVHLGDASPFKTMKQKVDAIDKATFTYSYSIIDGDILLGFIESINNHFTAVPNADGGCTVKSTIIFNTKGDAVVPEENIKFANDQNLTIFKAVEAYLIAN.

It belongs to the BetVI family.

The polypeptide is Pathogenesis-related protein B (PCPR1-3) (Petroselinum crispum (Parsley)).